The sequence spans 291 residues: Proteasomal ubiquitin receptor ADRM1 homolog rpn1301 (291 aa).

The Pru domain maps to 1 to 114; that stretch reads MSLITFKAGK…ERINSYIKDQ (114 aa). The tract at residues 135–162 is disordered; that stretch reads TVEQSEPIAQPTESSKESSEIGAPNSDE. A DEUBAD domain is found at 178–290; that stretch reads AQAGFGGSTV…ARFVSRNNGS (113 aa).

Belongs to the ADRM1 family. In terms of assembly, component of the 19S proteasome regulatory particle complex. The 2 S.pombe rpn13 homologs, rpn1301 and rpn1302 are present at a 0.2-1 ratio.

It is found in the cytoplasm. Its subcellular location is the nucleus. Component of the 26S proteasome, a multiprotein complex involved in the ATP-dependent degradation of ubiquitinated proteins. This complex plays a key role in the maintenance of protein homeostasis by removing misfolded or damaged proteins, which could impair cellular functions, and by removing proteins whose functions are no longer required. Therefore, the proteasome participates in numerous cellular processes, including cell cycle progression, apoptosis, or DNA damage repair. Within the complex, functions as a proteasomal ubiquitin receptor. The sequence is that of Proteasomal ubiquitin receptor ADRM1 homolog rpn1301 (rpn1301) from Schizosaccharomyces pombe (strain 972 / ATCC 24843) (Fission yeast).